A 188-amino-acid polypeptide reads, in one-letter code: Ribose 1,5-bisphosphate phosphokinase PhnN (188 aa).

Residue 9–16 coordinates ATP; sequence GPSGAGKD.

This sequence belongs to the ribose 1,5-bisphosphokinase family.

The catalysed reaction is alpha-D-ribose 1,5-bisphosphate + ATP = 5-phospho-alpha-D-ribose 1-diphosphate + ADP. The protein operates within metabolic intermediate biosynthesis; 5-phospho-alpha-D-ribose 1-diphosphate biosynthesis; 5-phospho-alpha-D-ribose 1-diphosphate from D-ribose 5-phosphate (route II): step 3/3. In terms of biological role, catalyzes the phosphorylation of ribose 1,5-bisphosphate to 5-phospho-D-ribosyl alpha-1-diphosphate (PRPP). This is Ribose 1,5-bisphosphate phosphokinase PhnN from Pectobacterium atrosepticum (strain SCRI 1043 / ATCC BAA-672) (Erwinia carotovora subsp. atroseptica).